We begin with the raw amino-acid sequence, 418 residues long: CinA-like protein (418 aa).

It belongs to the CinA family.

In Cytophaga hutchinsonii (strain ATCC 33406 / DSM 1761 / CIP 103989 / NBRC 15051 / NCIMB 9469 / D465), this protein is CinA-like protein.